Here is a 384-residue protein sequence, read N- to C-terminus: O-phospho-L-seryl-tRNA:Cys-tRNA synthase 1 (384 aa).

Pyridoxal 5'-phosphate-binding positions include 88–89, asparagine 195, and 218–220; these read AR and SGH. N6-(pyridoxal phosphate)lysine is present on lysine 221.

This sequence belongs to the SepCysS family. In terms of assembly, homodimer. Interacts with SepRS. The cofactor is pyridoxal 5'-phosphate.

It catalyses the reaction O-phospho-L-seryl-tRNA(Cys) + hydrogen sulfide + H(+) = L-cysteinyl-tRNA(Cys) + phosphate. Functionally, converts O-phospho-L-seryl-tRNA(Cys) (Sep-tRNA(Cys)) to L-cysteinyl-tRNA(Cys) (Cys-tRNA(Cys)). This Methanocella arvoryzae (strain DSM 22066 / NBRC 105507 / MRE50) protein is O-phospho-L-seryl-tRNA:Cys-tRNA synthase 1.